The primary structure comprises 190 residues: Translation initiation factor IF-3 (190 aa).

Residues Gln-159–Glu-190 are disordered.

The protein belongs to the IF-3 family. In terms of assembly, monomer.

Its subcellular location is the cytoplasm. Its function is as follows. IF-3 binds to the 30S ribosomal subunit and shifts the equilibrium between 70S ribosomes and their 50S and 30S subunits in favor of the free subunits, thus enhancing the availability of 30S subunits on which protein synthesis initiation begins. The protein is Translation initiation factor IF-3 of Prochlorococcus marinus (strain MIT 9215).